A 149-amino-acid chain; its full sequence is Myoglobin (149 aa).

At Ala-2 the chain carries N-acetylalanine. A Globin domain is found at Ala-2–Lys-143. Heme b is bound at residue His-89.

Belongs to the globin family. As to quaternary structure, monomeric.

The protein localises to the cytoplasm. The protein resides in the sarcoplasm. It catalyses the reaction Fe(III)-heme b-[protein] + nitric oxide + H2O = Fe(II)-heme b-[protein] + nitrite + 2 H(+). The catalysed reaction is H2O2 + AH2 = A + 2 H2O. Monomeric heme protein which primary function is to store oxygen and facilitate its diffusion within muscle tissues. Reversibly binds oxygen through a pentacoordinated heme iron and enables its timely and efficient release as needed during periods of heightened demand. Depending on the oxidative conditions of tissues and cells, and in addition to its ability to bind oxygen, it also has a nitrite reductase activity whereby it regulates the production of bioactive nitric oxide. Under stress conditions, like hypoxia and anoxia, it also protects cells against reactive oxygen species thanks to its pseudoperoxidase activity. This chain is Myoglobin (mb), found in Hemitriakis japanica (Japanese topeshark).